Consider the following 229-residue polypeptide: Putative N-acetylmannosamine-6-phosphate 2-epimerase (229 aa).

This sequence belongs to the NanE family.

The catalysed reaction is an N-acyl-D-glucosamine 6-phosphate = an N-acyl-D-mannosamine 6-phosphate. The protein operates within amino-sugar metabolism; N-acetylneuraminate degradation; D-fructose 6-phosphate from N-acetylneuraminate: step 3/5. Converts N-acetylmannosamine-6-phosphate (ManNAc-6-P) to N-acetylglucosamine-6-phosphate (GlcNAc-6-P). This chain is Putative N-acetylmannosamine-6-phosphate 2-epimerase, found in Escherichia coli O7:K1 (strain IAI39 / ExPEC).